Consider the following 378-residue polypeptide: Chaperone protein DnaJ (378 aa).

Residues 5-70 (DYYESLGVAK…QKRAAYDQYG (66 aa)) form the J domain. Residues 133–211 (GVTKEIRIPA…CHGHGRVEKS (79 aa)) form a CR-type zinc finger. Positions 146, 149, 163, 166, 185, 188, 199, and 202 each coordinate Zn(2+). 4 CXXCXGXG motif repeats span residues 146–153 (CDVCHGNG), 163–170 (CPTCHGNG), 185–192 (CPHCHGRG), and 199–206 (CVKCHGHG).

Belongs to the DnaJ family. In terms of assembly, homodimer. Zn(2+) serves as cofactor.

It is found in the cytoplasm. Participates actively in the response to hyperosmotic and heat shock by preventing the aggregation of stress-denatured proteins and by disaggregating proteins, also in an autonomous, DnaK-independent fashion. Unfolded proteins bind initially to DnaJ; upon interaction with the DnaJ-bound protein, DnaK hydrolyzes its bound ATP, resulting in the formation of a stable complex. GrpE releases ADP from DnaK; ATP binding to DnaK triggers the release of the substrate protein, thus completing the reaction cycle. Several rounds of ATP-dependent interactions between DnaJ, DnaK and GrpE are required for fully efficient folding. Also involved, together with DnaK and GrpE, in the DNA replication of plasmids through activation of initiation proteins. This is Chaperone protein DnaJ from Pectobacterium carotovorum subsp. carotovorum (strain PC1).